The sequence spans 313 residues: Intelectin-1 (313 aa).

The N-terminal stretch at 1–18 (MNQLSFLLFLIATTRGWS) is a signal peptide. A Fibrinogen C-terminal domain is found at 32 to 255 (SSSPSLPRSC…AANALCAGMR (224 aa)). Residues Cys-41 and Cys-70 are joined by a disulfide bond. The Ca(2+) site is built by His-86, Glu-87, Asp-89, Gly-92, Gly-97, Asp-98, and Asp-133. 3 disulfides stabilise this stretch: Cys-94–Cys-280, Cys-199–Cys-259, and Cys-251–Cys-265. N-linked (GlcNAc...) asparagine glycosylation occurs at Asn-163. The Ca(2+) site is built by Asn-260, Glu-262, Glu-274, and Asp-282. A carbohydrate-binding positions include 262–263 (EH) and Glu-274. The GPI-anchor amidated serine moiety is linked to residue Ser-298. The propeptide occupies 299 to 313 (SSREITEAAVLLFYR).

In terms of assembly, homotrimer; disulfide-linked. May interact with LTF. N-glycosylated. As to expression, highly expressed in omental adipose tissue where it is found in stromal vascular cells but not in fat cells but is barely detectable in subcutaneous adipose tissue (at protein level). Highly expressed in the small intestine. Also found in the heart, testis, colon, salivary gland, skeletal muscle, pancreas and thyroid and, to a lesser degree, in the uterus, spleen, prostate, lymph node and thymus.

It localises to the cell membrane. The protein localises to the secreted. Functionally, lectin that specifically recognizes microbial carbohydrate chains in a calcium-dependent manner. Binds to microbial glycans that contain a terminal acyclic 1,2-diol moiety, including beta-linked D-galactofuranose (beta-Galf), D-phosphoglycerol-modified glycans, D-glycero-D-talo-oct-2-ulosonic acid (KO) and 3-deoxy-D-manno-oct-2-ulosonic acid (KDO). Binds to glycans from Gram-positive and Gram-negative bacteria, including K.pneumoniae, S.pneumoniae, Y.pestis, P.mirabilis and P.vulgaris. Does not bind human glycans. Probably plays a role in the defense system against microorganisms. May function as adipokine that has no effect on basal glucose uptake but enhances insulin-stimulated glucose uptake in adipocytes. Increases AKT phosphorylation in the absence and presence of insulin. May interact with lactoferrin/LTF and increase its uptake, and may thereby play a role in iron absorption. The protein is Intelectin-1 (ITLN1) of Homo sapiens (Human).